The primary structure comprises 384 residues: Lipoprotein LprN (384 aa).

A signal peptide spans 1-20; the sequence is MNRIWLRAIILTASSALLAG. C21 carries the N-palmitoyl cysteine lipid modification. The S-diacylglycerol cysteine moiety is linked to residue C21.

Lipidated upon expression in E.coli.

Its subcellular location is the cell membrane. Its function is as follows. Stimulates the host (mouse) immune response; lipidated protein produced in E.coli stimulates T-cell proliferation in mice previously sensitized with LprN. Spleenocytes from these mice produce increased amounts of TNF-alpha and IFN-gamma, as well as somewhat increased nitric oxide levels, upon subsequent challenge with LprN. Previously sensitized mice infected with M.tuberculosis have an exacerbated disease response, suggesting this lipoprotein may down-regulate the host's immune response. The sequence is that of Lipoprotein LprN (lprN) from Mycobacterium tuberculosis (strain ATCC 25618 / H37Rv).